Here is a 107-residue protein sequence, read N- to C-terminus: UPF0145 protein CKO_02237 (107 aa).

The protein belongs to the UPF0145 family.

The polypeptide is UPF0145 protein CKO_02237 (Citrobacter koseri (strain ATCC BAA-895 / CDC 4225-83 / SGSC4696)).